The primary structure comprises 82 residues: Small ribosomal subunit protein bS16 (82 aa).

The protein belongs to the bacterial ribosomal protein bS16 family.

In Pasteurella multocida (strain Pm70), this protein is Small ribosomal subunit protein bS16.